The primary structure comprises 326 residues: uncharacterized protein (326 aa).

2 consecutive transmembrane segments (helical) span residues 9–29 (WVVL…RWSL) and 33–53 (ISIC…ANSY). The NADP(+) site is built by Asp-120, Asn-148, Tyr-214, Lys-218, and Thr-252. Tyr-214 (proton acceptor) is an active-site residue. Lys-218 serves as the catalytic Lowers pKa of active site Tyr.

This sequence belongs to the short-chain dehydrogenases/reductases (SDR) family.

The protein localises to the mitochondrion membrane. Functionally, involved in the resistance to DNA-damaging agents. This is an uncharacterized protein from Saccharomyces cerevisiae (strain ATCC 204508 / S288c) (Baker's yeast).